Reading from the N-terminus, the 397-residue chain is CCA-adding enzyme (397 aa).

2 residues coordinate ATP: glycine 26 and arginine 29. 2 residues coordinate CTP: glycine 26 and arginine 29. Mg(2+) contacts are provided by aspartate 39 and aspartate 41. ATP-binding residues include arginine 110, aspartate 153, arginine 156, arginine 159, and arginine 162. CTP contacts are provided by arginine 110, aspartate 153, arginine 156, arginine 159, and arginine 162.

Belongs to the tRNA nucleotidyltransferase/poly(A) polymerase family. Bacterial CCA-adding enzyme type 3 subfamily. In terms of assembly, homodimer. The cofactor is Mg(2+).

It catalyses the reaction a tRNA precursor + 2 CTP + ATP = a tRNA with a 3' CCA end + 3 diphosphate. The catalysed reaction is a tRNA with a 3' CCA end + 2 CTP + ATP = a tRNA with a 3' CCACCA end + 3 diphosphate. In terms of biological role, catalyzes the addition and repair of the essential 3'-terminal CCA sequence in tRNAs without using a nucleic acid template. Adds these three nucleotides in the order of C, C, and A to the tRNA nucleotide-73, using CTP and ATP as substrates and producing inorganic pyrophosphate. tRNA 3'-terminal CCA addition is required both for tRNA processing and repair. Also involved in tRNA surveillance by mediating tandem CCA addition to generate a CCACCA at the 3' terminus of unstable tRNAs. While stable tRNAs receive only 3'-terminal CCA, unstable tRNAs are marked with CCACCA and rapidly degraded. In Bacillus cereus (strain Q1), this protein is CCA-adding enzyme.